Reading from the N-terminus, the 151-residue chain is Probable desiccation-related protein LEA14 (151 aa).

Belongs to the LEA type 2 family.

The chain is Probable desiccation-related protein LEA14 (LEA14) from Arabidopsis thaliana (Mouse-ear cress).